A 159-amino-acid polypeptide reads, in one-letter code: Ribosomal RNA large subunit methyltransferase H (159 aa).

Residues L76, G108, and F127–F132 each bind S-adenosyl-L-methionine.

This sequence belongs to the RNA methyltransferase RlmH family. As to quaternary structure, homodimer.

It localises to the cytoplasm. The catalysed reaction is pseudouridine(1915) in 23S rRNA + S-adenosyl-L-methionine = N(3)-methylpseudouridine(1915) in 23S rRNA + S-adenosyl-L-homocysteine + H(+). In terms of biological role, specifically methylates the pseudouridine at position 1915 (m3Psi1915) in 23S rRNA. The protein is Ribosomal RNA large subunit methyltransferase H of Streptococcus thermophilus (strain CNRZ 1066).